We begin with the raw amino-acid sequence, 122 residues long: Protein preY, mitochondrial (122 aa).

A mitochondrion-targeting transit peptide spans 1-40; it reads MLAVRAWGRTYNTLVQRKLNAACPTGALPAVTLRPLHCSL. Positions 56–102 constitute a TRM112 domain; the sequence is DPTLLQFLVCPLSRKSLRYEESTNELINDELGIAYPIVDGIPNMIPQ.

This sequence belongs to the PREY family.

Its subcellular location is the mitochondrion. Its function is as follows. In mitochondria, S-adenosylmethionine-dependent methyltransferase chaperone that supports both coenzyme Q biosynthesis and NADH:ubiquinone oxidoreductase complex (complex I, MT-ND1) assembly. This chain is Protein preY, mitochondrial (pyurf), found in Xenopus tropicalis (Western clawed frog).